Consider the following 267-residue polypeptide: Corrinoid adenosyltransferase EutT (267 aa).

Positions 80 and 83 each coordinate a divalent metal cation.

Belongs to the Cob(I)alamin adenosyltransferase family. EutT subfamily. In terms of assembly, homodimer. A divalent metal cation is required as a cofactor.

Its subcellular location is the bacterial microcompartment. It carries out the reaction 2 cob(II)alamin + reduced [electron-transfer flavoprotein] + 2 ATP + 2 H2O = 2 adenosylcob(III)alamin + oxidized [electron-transfer flavoprotein] + 2 phosphate + 2 diphosphate + 3 H(+). The catalysed reaction is 2 cob(II)inamide + reduced [electron-transfer flavoprotein] + 2 ATP + 2 H2O = 2 adenosylcob(III)inamide + oxidized [electron-transfer flavoprotein] + 2 phosphate + 2 diphosphate + 3 H(+). It participates in amine and polyamine degradation; ethanolamine degradation. Converts cyanocobalamin (CN-B12) to adenosylcobalamin (AdoCbl), the inducer of the eut operon. Is not active on cobinamide nor other intermediates in the adenosylcobalamin synthetic pathway. Allows full induction of the eut operon. Can use ADP, CTP and dATP in place of ATP, and cobinamide in place of cobalamin, none are as efficiently used as ATP and cobalamin. In terms of biological role, expression of the eut operon allows this bacteria to use ethanolamine (EA) as a carbon, nitrogen and energy source. It relies on cobalamin (vitamin B12) both as a cofactor for the ethanolamine ammonia-lyase (EAL) activity and to induce the operon. EA enhances bacterial survival in macrophages in a concentration-dependent manner, suggesting it is an important nutrient during infection. The sequence is that of Corrinoid adenosyltransferase EutT from Salmonella typhimurium (strain LT2 / SGSC1412 / ATCC 700720).